A 168-amino-acid chain; its full sequence is Crossover junction endodeoxyribonuclease RuvC (168 aa).

Residues D7, E66, and D138 contribute to the active site. Mg(2+) is bound by residues D7, E66, and D138.

It belongs to the RuvC family. In terms of assembly, homodimer which binds Holliday junction (HJ) DNA. The HJ becomes 2-fold symmetrical on binding to RuvC with unstacked arms; it has a different conformation from HJ DNA in complex with RuvA. In the full resolvosome a probable DNA-RuvA(4)-RuvB(12)-RuvC(2) complex forms which resolves the HJ. It depends on Mg(2+) as a cofactor.

It is found in the cytoplasm. It carries out the reaction Endonucleolytic cleavage at a junction such as a reciprocal single-stranded crossover between two homologous DNA duplexes (Holliday junction).. Its function is as follows. The RuvA-RuvB-RuvC complex processes Holliday junction (HJ) DNA during genetic recombination and DNA repair. Endonuclease that resolves HJ intermediates. Cleaves cruciform DNA by making single-stranded nicks across the HJ at symmetrical positions within the homologous arms, yielding a 5'-phosphate and a 3'-hydroxyl group; requires a central core of homology in the junction. The consensus cleavage sequence is 5'-(A/T)TT(C/G)-3'. Cleavage occurs on the 3'-side of the TT dinucleotide at the point of strand exchange. HJ branch migration catalyzed by RuvA-RuvB allows RuvC to scan DNA until it finds its consensus sequence, where it cleaves and resolves the cruciform DNA. This chain is Crossover junction endodeoxyribonuclease RuvC, found in Cereibacter sphaeroides (strain ATCC 17023 / DSM 158 / JCM 6121 / CCUG 31486 / LMG 2827 / NBRC 12203 / NCIMB 8253 / ATH 2.4.1.) (Rhodobacter sphaeroides).